Consider the following 1012-residue polypeptide: MDSVSFFNPYLEANRLKKKSRSSYIRILPRGIMHDGAAGLIKDVCDSEPRMFYRDRQYLLSKEMTWPSLDRVRSKDYDHTRMKFHIYDAVETLMFTDSIENLPFQYRHFVIPSGTVIRMFGRSEDGEKICVNVFGQEQYFYCECVDGKSLKATINNLMLTGEVKMSCSFVIEPADKLSLYGYNANTVVNLFKVSFGNFYVSQRIGKILQNEGFVVYEIDVDVLTRFFVDNGFLSFGWYNVKKYIPQDMGKGSNLEVEINCHVSDLVSLENVNWPLYGCWSFDIECLGQNGNFPDAENLGDIVIQISVVSFDTEGDRDERHLFTLGTCEQIDGVHIYEFASEFELLLGFFIFLRIESPEFITGYNINNFDLKYLCIRMDKIYHYEIGCFSKLKNGKIGISVPHEQYKKGFLQAQTKVFTSGVLYLDMYPVYSSKITAQNYKLDTIAKICLQQEKEQLSYKEIPKKFISGPSGRAVVGKYCLQDSVLVVRLFKQINYHYEVAEVARLAHVTARCVVFEGQQKKIFPCILTEAKRRNMILPSMVSSHNRQGIGYKGATVLEPKTGYYAVPTVVFDFQSLYPSIMMAHNLCYSTLVLDERQIAGLSESDILTVKLGDETHRFVKPCVRESVLGSLLKDWLAKRREVKAEMQNCSDPMMKLLLDKKQLALKTTCNSVYGVTGAAHGLLPCVAIAASVTCLGREMLCSTVDYVNSKMQSEQFFCEELGLTASDFTGDLKVEVIYGDTDSIFMSVRNMANESLRRIAPMIAKHITDRLFKSPIKLEFEKILCPLILICKKRYIGRQDDSLLIFKGVDLVRKTSCDFVKGVVKDIVDLLFFDEEVQTAAVEFSHMTQTQLREQGVPVGIHKILRRLCKAREELFQNRADVRHLMLSSVLSKEVAAYKQPNLAHLSVIRRLAQRKEEIPNVGDRIMYVLIAPSTGNKQTHNYELAEDPNYVLEHKIPIHAEKYFDQIIKAVTNAISPIFPKTDIKKEKLLLYLLPMKVYLDETFSAIAEVM.

Belongs to the DNA polymerase type-B family.

It localises to the host nucleus. It carries out the reaction DNA(n) + a 2'-deoxyribonucleoside 5'-triphosphate = DNA(n+1) + diphosphate. Its function is as follows. Replicates viral genomic DNA. The sequence is that of DNA polymerase catalytic subunit (U38) from Human herpesvirus 6B (strain Z29) (HHV-6 variant B).